Reading from the N-terminus, the 2327-residue chain is Nonribosomal peptide synthetase apmB (2327 aa).

The interval 214–605 (DTQAKSRPDS…GRKDMQIKLR (392 aa)) is adenylation 1. A Carrier 1 domain is found at 734–810 (EPATATGKVL…EMADACTKVI (77 aa)). Residue Ser771 is modified to O-(pantetheine 4'-phosphoryl)serine. Residues 845–1259 (EDLYPCTAMQ…IFISSKDQES (415 aa)) form a condensation 1 region. The tract at residues 1281 to 1675 (ERIAERPDHE…RRKDTQVKLR (395 aa)) is adenylation 2. Positions 1816–1892 (PPTTDMQITM…AISAVAETLS (77 aa)) constitute a Carrier 2 domain. At Ser1853 the chain carries O-(pantetheine 4'-phosphoryl)serine. The condensation 2 stretch occupies residues 1937-2260 (TDFQSLAING…VFQYQDFGGE (324 aa)). Residues 2299–2327 (RVDLPRRPSPAGDTRDGPTAASDSPSRAR) are disordered.

The protein belongs to the NRP synthetase family.

The enzyme catalyses N-benzoyl-L-phenylalaninol + benzoate + L-phenylalanine + 2 ATP = asperphenamate + 2 AMP + 2 diphosphate + H(+). It participates in secondary metabolite biosynthesis. Its function is as follows. Nonribosomal peptide synthetase; part of the gene cluster that mediates the biosynthesis of asperphenamate, a rare linear amino acid ester that exhibits antitumor activity towards a number of cell lines. The structure of asperphenamate contains two subunits, N-benzoylphenylalanine and N-benzoylphenylalaninol, which are connected by an inter-molecular ester bond. The first step of asperphenamate biosynthesis is the generation of N-benzoylphenylalaninol by the nonribosomal peptide synthase apmA. Using phenylalanine and benzoic acid as substrates, apmA catalyzes amide bond formation and tethers the intermediate into the NRPS chain. Then, the terminal R domain of apmA catalyzes the reduction reaction to get the shunt product N-benzoylphenylalaninol. Subsequently, the nonribosomal peptide synthase apmB activates the same substrates as does apmA (phenylalanine and benzoic acid) to produce N-benzoylphenylalanine before condensing N-benzoylphenylalanine and N-benzoylphenylalaninol to release asperphenamate. The protein is Nonribosomal peptide synthetase apmB of Penicillium brevicompactum.